Reading from the N-terminus, the 314-residue chain is uncharacterized protein (314 aa).

The segment covering 68 to 91 (EKKKKSSSFEKRDKRRVQLKEKSP) has biased composition (basic and acidic residues). Disordered stretches follow at residues 68-97 (EKKKKSSSFEKRDKRRVQLKEKSPLRTPRN) and 141-164 (MDVQSPSTMSTSKNNVRNAERPAS). The segment covering 144–157 (QSPSTMSTSKNNVR) has biased composition (polar residues).

Its subcellular location is the mitochondrion. This is an uncharacterized protein from Schizosaccharomyces pombe (strain 972 / ATCC 24843) (Fission yeast).